We begin with the raw amino-acid sequence, 252 residues long: 2-succinyl-6-hydroxy-2,4-cyclohexadiene-1-carboxylate synthase (252 aa).

Belongs to the AB hydrolase superfamily. MenH family. As to quaternary structure, monomer.

It carries out the reaction 5-enolpyruvoyl-6-hydroxy-2-succinyl-cyclohex-3-ene-1-carboxylate = (1R,6R)-6-hydroxy-2-succinyl-cyclohexa-2,4-diene-1-carboxylate + pyruvate. It functions in the pathway quinol/quinone metabolism; 1,4-dihydroxy-2-naphthoate biosynthesis; 1,4-dihydroxy-2-naphthoate from chorismate: step 3/7. Its pathway is quinol/quinone metabolism; menaquinone biosynthesis. Its function is as follows. Catalyzes a proton abstraction reaction that results in 2,5-elimination of pyruvate from 2-succinyl-5-enolpyruvyl-6-hydroxy-3-cyclohexene-1-carboxylate (SEPHCHC) and the formation of 2-succinyl-6-hydroxy-2,4-cyclohexadiene-1-carboxylate (SHCHC). This Escherichia coli O81 (strain ED1a) protein is 2-succinyl-6-hydroxy-2,4-cyclohexadiene-1-carboxylate synthase.